The primary structure comprises 465 residues: MSRPIEWSPENGAAVCLVEEYNYPMAIRCYKCNVLFDITGLPYTVDAFIEKHDSITSGMEGNQCRIKDLGDDWKKGLFSNFFFKTELSDTEEKITCTNCVWSRNVLKNSYYTRGMIKYAHDNESPACIIKNTEEMKTSDSWQYGNSCDVNFMQMETPFKKFTNKSVICSSCMTIIAGRDEHPTFGGFVNSHFINNPHCKDMDFLKNLSIDSRRIVVIANLDDFPDYNSDTSSSEGESSVGDEITYYNADEFTEMFGDDSDDDSDDEGIEDLSAYDEAMSVNDVDYKDVKERECSFSTWPKQMKQDSKEMAEAGWYYTGKSDRVRCFHCGITFGGWMPDDDPWSIHKLMEKETCGWLEFNPDKIPKVLRYIDDEGGEDKEEDGGGGGVIEFPKNNKEVENPKRGSCKACYERKADIAFIPCGHVFSCNICTMEMFASYKKKKRCPMCRVHVEKVQKIFLDEDEDMA.

Residues 291-357 form a BIR repeat; the sequence is RECSFSTWPK…MEKETCGWLE (67 aa). Over residues 373–382 the composition is skewed to acidic residues; the sequence is EGGEDKEEDG. The tract at residues 373–393 is disordered; sequence EGGEDKEEDGGGGGVIEFPKN. Residues 405-447 form an RING-type zinc finger; the sequence is CKACYERKADIAFIPCGHVFSCNICTMEMFASYKKKKRCPMCR.

This is Putative apoptosis inhibitor ORF106 from Magallana gigas (Pacific oyster).